Reading from the N-terminus, the 170-residue chain is Putative phosphoesterase OB1230 (170 aa).

H34 serves as the catalytic Proton donor. 2 short sequence motifs (HXTX) span residues H34 to L37 and H115 to I118. H115 acts as the Proton acceptor in catalysis.

This sequence belongs to the 2H phosphoesterase superfamily. YjcG family.

The polypeptide is Putative phosphoesterase OB1230 (Oceanobacillus iheyensis (strain DSM 14371 / CIP 107618 / JCM 11309 / KCTC 3954 / HTE831)).